The primary structure comprises 832 residues: WD repeat-containing protein 75 (832 aa).

13 WD repeats span residues 4–43 (QCQI…KVYS), 47–86 (EECI…KLWD), 90–131 (GILI…QLVS), 145–184 (KEIS…YYFK), 193–230 (LKAT…RLWR), 236–275 (KEYT…VQWP), 278–317 (SEEK…SIID), 323–361 (SGII…QFYS), 375–424 (QQEF…KLWE), 431–477 (SFVL…KVWM), 490–528 (SWLC…TVWE), 532–572 (WDLK…CCWN), and 577–614 (ALEW…FLFQ). Residues 764-798 (SQSTEESKEDEEMKSEHSEADSSDETEEMESQKRF) are disordered.

As to quaternary structure, component of the proposed t-UTP subcomplex of the ribosomal small subunit (SSU) processome. SSU processome is composed of more than 70 proteins and the RNA chaperone small nucleolar RNA (snoRNA) U3.

The protein resides in the nucleus. The protein localises to the nucleolus. Ribosome biogenesis factor. Part of the small subunit (SSU) processome, first precursor of the small eukaryotic ribosomal subunit. During the assembly of the SSU processome in the nucleolus, many ribosome biogenesis factors, an RNA chaperone and ribosomal proteins associate with the nascent pre-rRNA and work in concert to generate RNA folding, modifications, rearrangements and cleavage as well as targeted degradation of pre-ribosomal RNA by the RNA exosome. Involved in nucleolar processing of pre-18S ribosomal RNA. Required for optimal pre-ribosomal RNA transcription by RNA polymerase I. This chain is WD repeat-containing protein 75 (wdr75), found in Xenopus laevis (African clawed frog).